A 342-amino-acid chain; its full sequence is Ribosomal RNA small subunit methyltransferase C (342 aa).

The protein belongs to the methyltransferase superfamily. RsmC family. Monomer.

It localises to the cytoplasm. It carries out the reaction guanosine(1207) in 16S rRNA + S-adenosyl-L-methionine = N(2)-methylguanosine(1207) in 16S rRNA + S-adenosyl-L-homocysteine + H(+). Its function is as follows. Specifically methylates the guanine in position 1207 of 16S rRNA in the 30S particle. The sequence is that of Ribosomal RNA small subunit methyltransferase C from Salmonella paratyphi A (strain ATCC 9150 / SARB42).